Reading from the N-terminus, the 471-residue chain is Mannose-1-phosphate guanylyltransferase (471 aa).

It belongs to the mannose-6-phosphate isomerase type 2 family.

The catalysed reaction is alpha-D-mannose 1-phosphate + GTP + H(+) = GDP-alpha-D-mannose + diphosphate. It participates in nucleotide-sugar biosynthesis; GDP-alpha-D-mannose biosynthesis; GDP-alpha-D-mannose from alpha-D-mannose 1-phosphate (GTP route): step 1/1. Involved in GDP-mannose biosynthesis which serves as the activated sugar nucleotide precursor for mannose residues in cell surface polysaccharides. This enzyme participates in synthesis of the LPS O antigen. In Salmonella montevideo, this protein is Mannose-1-phosphate guanylyltransferase (manC).